Here is a 239-residue protein sequence, read N- to C-terminus: Ribonuclease PH (239 aa).

Phosphate is bound by residues R86 and G124–R126.

The protein belongs to the RNase PH family. In terms of assembly, homohexameric ring arranged as a trimer of dimers.

It catalyses the reaction tRNA(n+1) + phosphate = tRNA(n) + a ribonucleoside 5'-diphosphate. Phosphorolytic 3'-5' exoribonuclease that plays an important role in tRNA 3'-end maturation. Removes nucleotide residues following the 3'-CCA terminus of tRNAs; can also add nucleotides to the ends of RNA molecules by using nucleoside diphosphates as substrates, but this may not be physiologically important. Probably plays a role in initiation of 16S rRNA degradation (leading to ribosome degradation) during starvation. This Sinorhizobium fredii (strain NBRC 101917 / NGR234) protein is Ribonuclease PH.